Consider the following 185-residue polypeptide: MINEIKKDAQARMQKSLESLSHAFGQIRTGKAHPSILGSVMVPYYGSDTPISSVANITVKDSRTLQVVAFERNMLGAVDKAIQSAGLNLNPTNLGELLLISMPALTEETRKGFTKQARSAAEDARVAVRNIRRDALGDLKKLVKDKEISEDEERRATADIDKLTKDAEAQITKATEEKEKDLMAV.

It belongs to the RRF family.

It localises to the cytoplasm. Its function is as follows. Responsible for the release of ribosomes from messenger RNA at the termination of protein biosynthesis. May increase the efficiency of translation by recycling ribosomes from one round of translation to another. The chain is Ribosome-recycling factor from Pseudomonas fluorescens (strain SBW25).